A 562-amino-acid polypeptide reads, in one-letter code: NAD-dependent malic enzyme (562 aa).

Y101 (proton donor) is an active-site residue. R154 provides a ligand contact to NAD(+). The Proton acceptor role is filled by K172. E243, D244, and D267 together coordinate a divalent metal cation. Residues D267 and N415 each coordinate NAD(+).

This sequence belongs to the malic enzymes family. As to quaternary structure, homotetramer. Mg(2+) serves as cofactor. Mn(2+) is required as a cofactor.

The catalysed reaction is (S)-malate + NAD(+) = pyruvate + CO2 + NADH. It carries out the reaction oxaloacetate + H(+) = pyruvate + CO2. The protein is NAD-dependent malic enzyme of Shewanella oneidensis (strain ATCC 700550 / JCM 31522 / CIP 106686 / LMG 19005 / NCIMB 14063 / MR-1).